The following is a 919-amino-acid chain: Glutamate receptor ionotropic, kainate 3 (919 aa).

A signal peptide spans 1-31 (MTAPWRRLRSLVWEYWAGFLVCAFWIPDSRG). The Extracellular portion of the chain corresponds to 32–563 (MPHVIRIGGI…VFSFLNPLSP (532 aa)). Residues Asn-70, Asn-76, Asn-278, Asn-381, Asn-415, Asn-426, and Asn-433 are each glycosylated (N-linked (GlcNAc...) asparagine). A disulfide bridge connects residues Cys-99 and Cys-350. Residues Pro-518, Thr-520, and Arg-525 each coordinate L-glutamate. Asn-548 and Asn-551 each carry an N-linked (GlcNAc...) asparagine glycan. The helical transmembrane segment at 564–584 (DIWMYVLLAYLGVSCVLFVIA) threads the bilayer. At 585–636 (RFSPYEWYDAHPCNPGSEVVENNFTLLNSFWFGMGSLMQQGSELMPKALSTR) the chain is on the cytoplasmic side. Residues 637–657 (IIGGIWWFFTLIIISSYTANL) traverse the membrane as a helical segment. The Extracellular segment spans residues 658–820 (AAFLTVERME…KEASALGIQK (163 aa)). L-glutamate-binding residues include Ala-691, Thr-692, and Glu-739. A glycan (N-linked (GlcNAc...) asparagine) is linked at Asn-752. The chain crosses the membrane as a helical span at residues 821–841 (IGGIFIVLAAGLVLSVLVAVG). Residues 842–919 (EFIYKLRKTA…CSTSLAPVFP (78 aa)) are Cytoplasmic-facing. Ser-869 carries the phosphoserine modification. Residue Lys-887 forms a Glycyl lysine isopeptide (Lys-Gly) (interchain with G-Cter in SUMO1) linkage.

The protein belongs to the glutamate-gated ion channel (TC 1.A.10.1) family. GRIK3 subfamily. Homotetramer, and heterotetramer with either GRIK4 or GRIK5. Can form functional heteromeric receptors with GRIK2. Interacts with PRKCABP. Interacts with NETO2. Detected in whole brain, cerebellum, brain cortex and hippocampus.

The protein localises to the cell membrane. It is found in the postsynaptic cell membrane. The enzyme catalyses Ca(2+)(in) = Ca(2+)(out). With respect to regulation, glutamate-gated receptor activity inhibited by spermine. In terms of biological role, ionotropic glutamate receptor that functions as a cation-permeable ligand-gated ion channel, gated by L-glutamate and the glutamatergic agonist kainic acid. Binding of the excitatory neurotransmitter L-glutamate induces a conformation change, leading to the opening of the cation channel, and thereby converts the chemical signal to an electrical impulse. The receptor then desensitizes rapidly and enters a transient inactive state, characterized by the presence of bound agonist. In association with GRIK2, involved in presynaptic facilitation of glutamate release at hippocampal mossy fiber synapses. The protein is Glutamate receptor ionotropic, kainate 3 (Grik3) of Mus musculus (Mouse).